Here is a 275-residue protein sequence, read N- to C-terminus: MAQVQMPVLETVRDNIGIAPFPEAKEHILEVKNLNIYYGEKRAVNDISMRIDKHAVTALIGPSGCGKSTFLRSINRMNDLIPSARTSGEIRYEGLNILDSNINVVNLRREIGMVFQKPNPFPKSIYSNITHALKYAGERRKSVLDEIVEESLTKAALWDEVKDRLHESALSLSGGQQQRLCIARTLAMKPEVLLLDEPASALDPISNAKIEELIVGLKEEYSIIIVTHNMQQASRISDQTAFFLNGDLIEYDRTEKIFMNPSEKKTEDYINGRFG.

Positions 29-270 constitute an ABC transporter domain; the sequence is LEVKNLNIYY…PSEKKTEDYI (242 aa). 61–68 contacts ATP; the sequence is GPSGCGKS.

Belongs to the ABC transporter superfamily. Phosphate importer (TC 3.A.1.7) family. The complex is composed of two ATP-binding proteins (PstB), two transmembrane proteins (PstC and PstA) and a solute-binding protein (PstS).

Its subcellular location is the cell membrane. It catalyses the reaction phosphate(out) + ATP + H2O = ADP + 2 phosphate(in) + H(+). Functionally, part of the ABC transporter complex PstSACB involved in phosphate import. Responsible for energy coupling to the transport system. The protein is Phosphate import ATP-binding protein PstB 2 of Bacillus licheniformis (strain ATCC 14580 / DSM 13 / JCM 2505 / CCUG 7422 / NBRC 12200 / NCIMB 9375 / NCTC 10341 / NRRL NRS-1264 / Gibson 46).